We begin with the raw amino-acid sequence, 257 residues long: Pyridoxine 5'-phosphate synthase (257 aa).

3-amino-2-oxopropyl phosphate is bound at residue asparagine 6. 8–9 (DH) provides a ligand contact to 1-deoxy-D-xylulose 5-phosphate. Residue arginine 17 coordinates 3-amino-2-oxopropyl phosphate. The Proton acceptor role is filled by histidine 41. 1-deoxy-D-xylulose 5-phosphate contacts are provided by arginine 43 and histidine 48. Residue glutamate 68 is the Proton acceptor of the active site. Position 98 (threonine 98) interacts with 1-deoxy-D-xylulose 5-phosphate. Residue histidine 210 is the Proton donor of the active site. 3-amino-2-oxopropyl phosphate-binding positions include glycine 211 and 232 to 233 (GQ).

The protein belongs to the PNP synthase family. As to quaternary structure, homooctamer; tetramer of dimers.

It is found in the cytoplasm. The catalysed reaction is 3-amino-2-oxopropyl phosphate + 1-deoxy-D-xylulose 5-phosphate = pyridoxine 5'-phosphate + phosphate + 2 H2O + H(+). It functions in the pathway cofactor biosynthesis; pyridoxine 5'-phosphate biosynthesis; pyridoxine 5'-phosphate from D-erythrose 4-phosphate: step 5/5. Functionally, catalyzes the complicated ring closure reaction between the two acyclic compounds 1-deoxy-D-xylulose-5-phosphate (DXP) and 3-amino-2-oxopropyl phosphate (1-amino-acetone-3-phosphate or AAP) to form pyridoxine 5'-phosphate (PNP) and inorganic phosphate. The protein is Pyridoxine 5'-phosphate synthase of Campylobacter jejuni subsp. doylei (strain ATCC BAA-1458 / RM4099 / 269.97).